A 315-amino-acid polypeptide reads, in one-letter code: S-methyl-5'-thioadenosine phosphorylase (315 aa).

Phosphate contacts are provided by residues S22, 65–66, and 98–99; these read RH and SA. A substrate-binding site is contributed by M205. A phosphate-binding site is contributed by S206. 229 to 231 is a substrate binding site; sequence DYD.

It belongs to the PNP/MTAP phosphorylase family. MTAP subfamily. As to quaternary structure, homotrimer.

The protein localises to the cytoplasm. Its subcellular location is the nucleus. The catalysed reaction is S-methyl-5'-thioadenosine + phosphate = 5-(methylsulfanyl)-alpha-D-ribose 1-phosphate + adenine. Its pathway is amino-acid biosynthesis; L-methionine biosynthesis via salvage pathway; S-methyl-5-thio-alpha-D-ribose 1-phosphate from S-methyl-5'-thioadenosine (phosphorylase route): step 1/1. Catalyzes the reversible phosphorylation of S-methyl-5'-thioadenosine (MTA) to adenine and 5-methylthioribose-1-phosphate. Involved in the breakdown of MTA, a major by-product of polyamine biosynthesis. Responsible for the first step in the methionine salvage pathway after MTA has been generated from S-adenosylmethionine. Has broad substrate specificity with 6-aminopurine nucleosides as preferred substrates. The sequence is that of S-methyl-5'-thioadenosine phosphorylase from Mycosarcoma maydis (Corn smut fungus).